We begin with the raw amino-acid sequence, 948 residues long: Bifunctional uridylyltransferase/uridylyl-removing enzyme (948 aa).

Residues 1–372 (METHHIDFST…RFANRSRKIP (372 aa)) form a uridylyltransferase region. Residues 373–728 (GTVEFVEDRG…VRTDSFHAIT (356 aa)) are uridylyl-removing. Positions 489–605 (VDEHLIRAVE…IDFADRVQSL (117 aa)) constitute an HD domain. 2 consecutive ACT domains span residues 729–810 (EITV…EVIA) and 840–921 (VIEV…ERMP).

It belongs to the GlnD family. Requires Mg(2+) as cofactor.

The catalysed reaction is [protein-PII]-L-tyrosine + UTP = [protein-PII]-uridylyl-L-tyrosine + diphosphate. It catalyses the reaction [protein-PII]-uridylyl-L-tyrosine + H2O = [protein-PII]-L-tyrosine + UMP + H(+). Its activity is regulated as follows. Uridylyltransferase (UTase) activity is inhibited by glutamine, while glutamine activates uridylyl-removing (UR) activity. In terms of biological role, modifies, by uridylylation and deuridylylation, the PII regulatory proteins (GlnB and homologs), in response to the nitrogen status of the cell that GlnD senses through the glutamine level. Under low glutamine levels, catalyzes the conversion of the PII proteins and UTP to PII-UMP and PPi, while under higher glutamine levels, GlnD hydrolyzes PII-UMP to PII and UMP (deuridylylation). Thus, controls uridylylation state and activity of the PII proteins, and plays an important role in the regulation of nitrogen fixation and metabolism. The chain is Bifunctional uridylyltransferase/uridylyl-removing enzyme from Rhizobium tropici.